A 393-amino-acid chain; its full sequence is Probable acetyl-CoA acyltransferase (393 aa).

Cys-88 functions as the Acyl-thioester intermediate in the catalytic mechanism. Active-site proton acceptor residues include His-349 and Cys-378.

This sequence belongs to the thiolase-like superfamily. Thiolase family.

The protein resides in the cytoplasm. It catalyses the reaction 2 acetyl-CoA = acetoacetyl-CoA + CoA. The polypeptide is Probable acetyl-CoA acyltransferase (Staphylococcus aureus (strain NCTC 8325 / PS 47)).